Here is a 365-residue protein sequence, read N- to C-terminus: tRNA-specific 2-thiouridylase MnmA (365 aa).

Residues 9–16 (AMSGGVDS) and methionine 35 each bind ATP. Cysteine 105 functions as the Nucleophile in the catalytic mechanism. A disulfide bridge connects residues cysteine 105 and cysteine 203. ATP is bound at residue glycine 129. The tract at residues 153-155 (KDQ) is interaction with tRNA. Cysteine 203 serves as the catalytic Cysteine persulfide intermediate. The interaction with tRNA stretch occupies residues 308–309 (RY).

Belongs to the MnmA/TRMU family.

The protein localises to the cytoplasm. The enzyme catalyses S-sulfanyl-L-cysteinyl-[protein] + uridine(34) in tRNA + AH2 + ATP = 2-thiouridine(34) in tRNA + L-cysteinyl-[protein] + A + AMP + diphosphate + H(+). In terms of biological role, catalyzes the 2-thiolation of uridine at the wobble position (U34) of tRNA, leading to the formation of s(2)U34. This chain is tRNA-specific 2-thiouridylase MnmA, found in Pelotomaculum thermopropionicum (strain DSM 13744 / JCM 10971 / SI).